The chain runs to 1163 residues: Actin cross-linking toxin VgrG1 (1163 aa).

The region spanning 728–1163 (TPDFPTHFPK…NPQEWQRIIA (436 aa)) is the ACD domain. 739 to 743 (SIGIE) provides a ligand contact to ATP. Mg(2+) contacts are provided by glutamate 743 and glutamate 805. Serine 808 contacts ATP. Residue glutamine 889 coordinates Mg(2+). Arginine 995 is a binding site for ATP. Residue glutamate 1066 coordinates Mg(2+).

The protein belongs to the VgrG protein family. As to quaternary structure, interacts with protein VC1417. The cofactor is Mg(2+).

Its subcellular location is the secreted. The protein resides in the host cytoplasm. The protein localises to the host cytosol. Part of the type VI secretion system (T6SS) specialized secretion system, which delivers several virulence factors in both prokaryotic and eukaryotic cells during infection. Forms the spike at the tip of the elongating tube probably formed by hemolysin co-regulated protein/Hcp. Allows the delivery of the TseL antibacterial toxin to target cells where it exerts its toxicity. Also acts directly as an actin-directed toxin that catalyzes the covalent cross-linking of host cytoplasmic monomeric actin. Mediates the cross-link between 'Lys-50' of one monomer and 'Glu-270' of another actin monomer, resulting in formation of highly toxic actin oligomers that cause cell rounding. The toxin can be highly efficient at very low concentrations by acting on formin homology family proteins: toxic actin oligomers bind with high affinity to formins and adversely affect both nucleation and elongation abilities of formins, causing their potent inhibition in both profilin-dependent and independent manners. Acts as an acid--amino-acid ligase that transfers the gamma-phosphoryl group of ATP to the 'Glu-270' actin residue, resulting in the formation of an activated acyl phosphate intermediate. This intermediate is further hydrolyzed and the energy of hydrolysis is utilized for the formation of the amide bond between actin subunits. The polypeptide is Actin cross-linking toxin VgrG1 (Vibrio cholerae serotype O1 (strain ATCC 39315 / El Tor Inaba N16961)).